The primary structure comprises 750 residues: Serine/threonine-protein kinase PknG (750 aa).

The segment at 1–66 (MAKASETERS…PQDRMATTSR (66 aa)) is disordered. Residues 17–34 (ADAQTATSATVRPLSTQA) are compositionally biased toward polar residues. A Protein kinase domain is found at 151-396 (YEVKGCIAHG…EMSAQLTGVL (246 aa)). ATP contacts are provided by residues 157-165 (IAHGGLGWI) and K181. D276 serves as the catalytic Proton acceptor.

This sequence belongs to the protein kinase superfamily. Ser/Thr protein kinase family. Autophosphorylated.

It carries out the reaction L-seryl-[protein] + ATP = O-phospho-L-seryl-[protein] + ADP + H(+). The catalysed reaction is L-threonyl-[protein] + ATP = O-phospho-L-threonyl-[protein] + ADP + H(+). The polypeptide is Serine/threonine-protein kinase PknG (pknG) (Mycobacterium bovis (strain ATCC BAA-935 / AF2122/97)).